A 323-amino-acid polypeptide reads, in one-letter code: Glucokinase (323 aa).

An ATP-binding site is contributed by 8–13; sequence GDVGGT.

Belongs to the bacterial glucokinase family.

It is found in the cytoplasm. The catalysed reaction is D-glucose + ATP = D-glucose 6-phosphate + ADP + H(+). This Yersinia pseudotuberculosis serotype I (strain IP32953) protein is Glucokinase.